The primary structure comprises 241 residues: MGRGRVQLKRIENKINRQVTFSKRRTGLLKKAHEISVLCDAEVALIVFSTKGKLFEYSTDSCMEKILDRYERYSYAERQLTATDPESQGNWSLEYSKLKAKIELLQRSQRHFLGEDLDSLSLKELQNLEQQLDTALKHIRSRKNQLMYESISELQRKEKAMQEQNNMLAKEIKEKEKTVAQQTHWEQQNHGLNTSSFLLPQQLPCLNMGGTYQGEAHGARRNELDLTLEPIYPSHLGCFTT.

Positions 1–61 (MGRGRVQLKR…GKLFEYSTDS (61 aa)) constitute an MADS-box domain. Residues 88 to 178 (QGNWSLEYSK…AKEIKEKEKT (91 aa)) form the K-box domain.

Expressed in tendrils and flowers.

Its subcellular location is the nucleus. Probable transcription factor involved in flower development. The protein is Agamous-like MADS-box protein AP1 of Vitis vinifera (Grape).